We begin with the raw amino-acid sequence, 1482 residues long: Chromosome partition protein MukB (1482 aa).

Residue 34-41 (GGNGAGKS) participates in ATP binding. Coiled-coil stretches lie at residues 337–418 (LNLV…QYQQ), 444–472 (LDTYQAKEQEATERLLSLEQKMSVAQTAH), 509–601 (RHLA…TSHA), 781–805 (AARESRIESLHAEREALSERYATLS), 835–1116 (EAEI…AKAG), and 1210–1265 (EAIE…LQSV). The interval 666–783 (PGGAEDARLN…SVPLFGRAAR (118 aa)) is flexible hinge. Residues 1049 to 1077 (ADAGAEERARQRRDELHTRLSNNRSRRNQ) form a disordered region. The segment covering 1051–1066 (AGAEERARQRRDELHT) has biased composition (basic and acidic residues).

The protein belongs to the SMC family. MukB subfamily. In terms of assembly, homodimerization via its hinge domain. Binds to DNA via its C-terminal region. Interacts, and probably forms a ternary complex, with MukE and MukF via its C-terminal region. The complex formation is stimulated by calcium or magnesium. Interacts with tubulin-related protein FtsZ.

It is found in the cytoplasm. The protein localises to the nucleoid. Functionally, plays a central role in chromosome condensation, segregation and cell cycle progression. Functions as a homodimer, which is essential for chromosome partition. Involved in negative DNA supercoiling in vivo, and by this means organize and compact chromosomes. May achieve or facilitate chromosome segregation by condensation DNA from both sides of a centrally located replisome during cell division. This chain is Chromosome partition protein MukB, found in Cronobacter sakazakii (strain ATCC BAA-894) (Enterobacter sakazakii).